A 724-amino-acid chain; its full sequence is MGLTSDEAKIIINTLGRNPTEAEWLIFEAEWSEHCSYKSSRAWIRLLPSKSPLVIRGSGLDAPIIRINNIAVTFKIESHNHPSAVDPYDGAATGVGGIVRDILTTGLRPIALLDNLHLGSLDNQRSLWLSRNIIKGISDYGNRIGVPVVGGETWFDESFNNNPIVLVTCIGAGDFKRVIWGEGKVGDLVLVVGNDTGRDGMLGSSFASRELSSSDDIGAVQVGNPLLEKLLIDALMELGERGLVKAIKDVGGGGLATALSELAHQLGLGIEVDLTNIRLRDELKPEEILVSESQERMIIVVDPSRLSYVEAVLRKYEVGFDLIGKLTNDGKFTAYYKGIKLIDLPLDLITNPPEPIRKYTEPVYLMRLRRIPPLPSVKFNEALIKVASSPNLASKEVIYTQYDYEVGVRTVIKPGRAGATVLRLLEEDGGDGKLGIAVKADSNPRYSYLNPFTGAANSLAKAYRNVASVGAKPIAAVDSINVGNPEKPDKYWYFVKTVEGLTWMGNALGIPFVGGKVSFYNEDSVTGASIKPVVAVAVLGVVNDYAKAIEGGLTGEGWLVIIGDTGPELGGSEFLHSVHGLVAGEPPEPKPLSEVKNANLVMQLINNGLAKAVMDVGVGGLAAALIKMSIIGGVGFTVDLSKAPLTQGLNDPVTVAFSETNARYIIETSNLKETVRIIEANGVPYGVLGESGGGIVQFKWGGLELASLSVDDLVSINDSLRGVI.

His-34 is a catalytic residue. Residues Tyr-37 and Lys-75 each contribute to the ATP site. A Mg(2+)-binding site is contributed by Glu-77. Residues 78 to 81 (SHNH) and Arg-100 contribute to the substrate site. The active-site Proton acceptor is the His-79. A Mg(2+)-binding site is contributed by Asp-101. Residue Gln-221 coordinates substrate. Position 249 (Asp-249) interacts with Mg(2+). Residue 292–294 (ESQ) participates in substrate binding. Asp-478 and Gly-515 together coordinate ATP. A substrate-binding site is contributed by Ser-518.

It belongs to the FGAMS family. Monomer. Part of the FGAM synthase complex composed of 1 PurL, 1 PurQ and 2 PurS subunits.

It is found in the cytoplasm. The catalysed reaction is N(2)-formyl-N(1)-(5-phospho-beta-D-ribosyl)glycinamide + L-glutamine + ATP + H2O = 2-formamido-N(1)-(5-O-phospho-beta-D-ribosyl)acetamidine + L-glutamate + ADP + phosphate + H(+). Its pathway is purine metabolism; IMP biosynthesis via de novo pathway; 5-amino-1-(5-phospho-D-ribosyl)imidazole from N(2)-formyl-N(1)-(5-phospho-D-ribosyl)glycinamide: step 1/2. Functionally, part of the phosphoribosylformylglycinamidine synthase complex involved in the purines biosynthetic pathway. Catalyzes the ATP-dependent conversion of formylglycinamide ribonucleotide (FGAR) and glutamine to yield formylglycinamidine ribonucleotide (FGAM) and glutamate. The FGAM synthase complex is composed of three subunits. PurQ produces an ammonia molecule by converting glutamine to glutamate. PurL transfers the ammonia molecule to FGAR to form FGAM in an ATP-dependent manner. PurS interacts with PurQ and PurL and is thought to assist in the transfer of the ammonia molecule from PurQ to PurL. This Caldivirga maquilingensis (strain ATCC 700844 / DSM 13496 / JCM 10307 / IC-167) protein is Phosphoribosylformylglycinamidine synthase subunit PurL.